Consider the following 298-residue polypeptide: Anamorsin homolog (298 aa).

The tract at residues 1–143 (MTQLIITYQS…IKAEKPSWKP (143 aa)) is N-terminal SAM-like domain. The interval 143-162 (PEEGKVLVDDIDLEGSVPDI) is linker. Residues Cys175, Cys182, Cys185, and Cys187 each coordinate [2Fe-2S] cluster. A fe-S binding site A region spans residues 175-187 (CKSKERACNNCNC). Cys218, Cys221, Cys229, and Cys232 together coordinate [4Fe-4S] cluster. Short sequence motifs (cx2C motif) lie at residues 218-221 (CGNC) and 229-232 (CSGC). The interval 218-232 (CGNCYLGDAFRCSGC) is fe-S binding site B.

It belongs to the anamorsin family. In terms of assembly, monomer. The cofactor is [2Fe-2S] cluster. [4Fe-4S] cluster is required as a cofactor.

It localises to the cytoplasm. The protein resides in the mitochondrion intermembrane space. Functionally, component of the cytosolic iron-sulfur (Fe-S) protein assembly (CIA) machinery. Required for the maturation of extramitochondrial Fe-S proteins. Part of an electron transfer chain functioning in an early step of cytosolic Fe-S biogenesis, facilitating the de novo assembly of a [4Fe-4S] cluster on the cytosolic Fe-S scaffold complex. Electrons are transferred from NADPH via a FAD- and FMN-containing diflavin oxidoreductase. Together with the diflavin oxidoreductase, also required for the assembly of the diferric tyrosyl radical cofactor of ribonucleotide reductase (RNR), probably by providing electrons for reduction during radical cofactor maturation in the catalytic small subunit. The chain is Anamorsin homolog from Cryptosporidium hominis.